Here is a 1056-residue protein sequence, read N- to C-terminus: Kinesin-like protein KIF11 (1056 aa).

Residues 18 to 359 (NIQVVVRCRP…LEYAHRAKNI (342 aa)) enclose the Kinesin motor domain. 105–112 (GQTGTGKT) is an ATP binding site. K146 carries the post-translational modification N6-acetyllysine. 2 coiled-coil regions span residues 364–480 (EVNQ…KEEY) and 736–763 (LEEK…DIVN). T458 carries the post-translational modification Phosphothreonine. A Glycyl lysine isopeptide (Lys-Gly) (interchain with G-Cter in SUMO2) cross-link involves residue K477. T925 carries the post-translational modification Phosphothreonine. A Phosphothreonine; by CDK1 modification is found at T926. S1033 bears the Phosphoserine; by NEK6 mark. K1034 is covalently cross-linked (Glycyl lysine isopeptide (Lys-Gly) (interchain with G-Cter in ubiquitin)).

The protein belongs to the TRAFAC class myosin-kinesin ATPase superfamily. Kinesin family. BimC subfamily. Interacts with the thyroid hormone receptor in the presence of thyroid hormone. Component of a large chromatin remodeling complex, at least composed of MYSM1, PCAF, RBM10 and KIF11/TRIP5. Interacts (via C-terminus) with the kinase NEK6 in both interphase and mitosis. Interacts with RARRES1 and AGBL2. Interacts with TPX2. Post-translationally, phosphorylated exclusively on serine during S phase, but on both serine and Thr-926 during mitosis, so controlling the association of KIF11 with the spindle apparatus (probably during early prophase). In terms of processing, a subset of this protein primarily localized at the spindle pole is phosphorylated by NEK6 during mitosis; phosphorylation is required for mitotic function. Ubiquitinated at Lys-1034 by UHRF1 via 'Lys-63'-linked ubiquitin chains, leading to interaction with spindle assembly factor TPX2, thereby ensuring accurate distribution to the spindles during metaphase.

The protein resides in the cytoplasm. The protein localises to the cytoskeleton. Its subcellular location is the spindle pole. Functionally, motor protein required for establishing a bipolar spindle and thus contributing to chromosome congression during mitosis. Required in non-mitotic cells for transport of secretory proteins from the Golgi complex to the cell surface. The sequence is that of Kinesin-like protein KIF11 (KIF11) from Homo sapiens (Human).